A 550-amino-acid chain; its full sequence is Warthog protein 8 (550 aa).

Residues 1–19 (MNYLLLVSGLLSVWQPVFG) form the signal peptide.

This sequence belongs to the hedgehog family. In terms of processing, the C-terminal domain displays an autoproteolysis activity.

Its subcellular location is the secreted. The protein localises to the cell surface. It is found in the cell membrane. It localises to the extracellular space. Intercellular signal essential for a variety of patterning events during development. The sequence is that of Warthog protein 8 (wrt-8) from Caenorhabditis elegans.